The primary structure comprises 207 residues: Large ribosomal subunit protein uL4 (207 aa).

The interval 52 to 75 (KNRSAVRGGGKKPWRQKGTGRARQ) is disordered. Positions 60–71 (GGKKPWRQKGTG) are enriched in basic residues.

This sequence belongs to the universal ribosomal protein uL4 family. Part of the 50S ribosomal subunit.

In terms of biological role, one of the primary rRNA binding proteins, this protein initially binds near the 5'-end of the 23S rRNA. It is important during the early stages of 50S assembly. It makes multiple contacts with different domains of the 23S rRNA in the assembled 50S subunit and ribosome. Functionally, forms part of the polypeptide exit tunnel. The sequence is that of Large ribosomal subunit protein uL4 from Limosilactobacillus fermentum (strain NBRC 3956 / LMG 18251) (Lactobacillus fermentum).